We begin with the raw amino-acid sequence, 353 residues long: Photosystem II protein D1 (353 aa).

The residue at position 2 (threonine 2) is an N-acetylthreonine. Threonine 2 is subject to Phosphothreonine. 3 helical membrane-spanning segments follow: residues 29 to 46, 118 to 133, and 142 to 156; these read YIGW…TATS, HFLL…EWEL, and WIAV…AATA. Residue histidine 118 participates in chlorophyll a binding. Pheophytin a is bound at residue tyrosine 126. Aspartate 170 and glutamate 189 together coordinate [CaMn4O5] cluster. Residues 197–218 traverse the membrane as a helical segment; the sequence is FHMLGVAGVFGGSLFSAMHGSL. Residue histidine 198 coordinates chlorophyll a. A quinone is bound by residues histidine 215 and 264–265; that span reads SF. Residue histidine 215 coordinates Fe cation. Histidine 272 lines the Fe cation pocket. The chain crosses the membrane as a helical span at residues 274 to 288; that stretch reads FLAAWPVVGIWFTAL. Residues histidine 332, glutamate 333, aspartate 342, and alanine 344 each coordinate [CaMn4O5] cluster. The propeptide occupies 345 to 353; sequence AIEAPSTNG.

Belongs to the reaction center PufL/M/PsbA/D family. PSII is composed of 1 copy each of membrane proteins PsbA, PsbB, PsbC, PsbD, PsbE, PsbF, PsbH, PsbI, PsbJ, PsbK, PsbL, PsbM, PsbT, PsbX, PsbY, PsbZ, Psb30/Ycf12, at least 3 peripheral proteins of the oxygen-evolving complex and a large number of cofactors. It forms dimeric complexes. The cofactor is The D1/D2 heterodimer binds P680, chlorophylls that are the primary electron donor of PSII, and subsequent electron acceptors. It shares a non-heme iron and each subunit binds pheophytin, quinone, additional chlorophylls, carotenoids and lipids. D1 provides most of the ligands for the Mn4-Ca-O5 cluster of the oxygen-evolving complex (OEC). There is also a Cl(-1) ion associated with D1 and D2, which is required for oxygen evolution. The PSII complex binds additional chlorophylls, carotenoids and specific lipids.. In terms of processing, tyr-161 forms a radical intermediate that is referred to as redox-active TyrZ, YZ or Y-Z. Post-translationally, C-terminally processed by CTPA; processing is essential to allow assembly of the oxygen-evolving complex and thus photosynthetic growth.

It is found in the plastid. The protein resides in the chloroplast thylakoid membrane. The catalysed reaction is 2 a plastoquinone + 4 hnu + 2 H2O = 2 a plastoquinol + O2. In terms of biological role, photosystem II (PSII) is a light-driven water:plastoquinone oxidoreductase that uses light energy to abstract electrons from H(2)O, generating O(2) and a proton gradient subsequently used for ATP formation. It consists of a core antenna complex that captures photons, and an electron transfer chain that converts photonic excitation into a charge separation. The D1/D2 (PsbA/PsbD) reaction center heterodimer binds P680, the primary electron donor of PSII as well as several subsequent electron acceptors. The protein is Photosystem II protein D1 of Gossypium barbadense (Sea Island cotton).